The chain runs to 208 residues: Na(+)-translocating NADH-quinone reductase subunit D (208 aa).

5 helical membrane passes run 42–62 (IVMG…ISLV), 72–92 (IIVQ…LLQA), 103–123 (VFVG…AFAM), 131–151 (LIDG…VATV), and 178–198 (NGLF…IWGL).

This sequence belongs to the NqrDE/RnfAE family. As to quaternary structure, composed of six subunits; NqrA, NqrB, NqrC, NqrD, NqrE and NqrF.

The protein resides in the cell inner membrane. The catalysed reaction is a ubiquinone + n Na(+)(in) + NADH + H(+) = a ubiquinol + n Na(+)(out) + NAD(+). Its function is as follows. NQR complex catalyzes the reduction of ubiquinone-1 to ubiquinol by two successive reactions, coupled with the transport of Na(+) ions from the cytoplasm to the periplasm. NqrA to NqrE are probably involved in the second step, the conversion of ubisemiquinone to ubiquinol. The polypeptide is Na(+)-translocating NADH-quinone reductase subunit D (Neisseria meningitidis serogroup B (strain ATCC BAA-335 / MC58)).